We begin with the raw amino-acid sequence, 273 residues long: Undecaprenyl-diphosphatase (273 aa).

Transmembrane regions (helical) follow at residues 1 to 21 (MEPI…FLPV), 39 to 59 (PALF…LIVF), 63 to 83 (LGMM…GIAP), 92 to 112 (LKLA…GLGL), 118 to 138 (LFFS…LLWL), 165 to 185 (GLAV…GLFL), 195 to 215 (FSFL…AVDL), 225 to 245 (ATVL…KVLI), and 252 to 272 (RFYL…WIGM).

It belongs to the UppP family.

The protein localises to the cell inner membrane. The catalysed reaction is di-trans,octa-cis-undecaprenyl diphosphate + H2O = di-trans,octa-cis-undecaprenyl phosphate + phosphate + H(+). In terms of biological role, catalyzes the dephosphorylation of undecaprenyl diphosphate (UPP). Confers resistance to bacitracin. This is Undecaprenyl-diphosphatase from Desulfosudis oleivorans (strain DSM 6200 / JCM 39069 / Hxd3) (Desulfococcus oleovorans).